Consider the following 203-residue polypeptide: Suppressor of RNA silencing p3 (203 aa).

This sequence belongs to the tenuiviruses p3 protein family. As to quaternary structure, homodimer.

It localises to the host cytoplasm. In terms of biological role, acts as a suppressor of RNA-mediated gene silencing, also known as post-transcriptional gene silencing (PTGS), presumably through the binding of dsRNA. In Oryza sativa (Rice), this protein is Suppressor of RNA silencing p3.